The chain runs to 241 residues: Zinc finger CCHC domain-containing protein 24 (241 aa).

Phosphoserine occurs at positions 65 and 93. The segment at 132-149 (YLCHLCFNKGHYIKDCPQ) adopts a CCHC-type zinc-finger fold.

This chain is Zinc finger CCHC domain-containing protein 24 (ZCCHC24), found in Macaca fascicularis (Crab-eating macaque).